Here is an 82-residue protein sequence, read N- to C-terminus: Large ribosomal subunit protein bL27 (82 aa).

The disordered stretch occupies residues 1–20 (MAHKKGASSSRNGRDSNPQY). Residues 7–19 (ASSSRNGRDSNPQ) are compositionally biased toward polar residues.

The protein belongs to the bacterial ribosomal protein bL27 family.

This Bifidobacterium longum (strain NCC 2705) protein is Large ribosomal subunit protein bL27.